A 347-amino-acid polypeptide reads, in one-letter code: NAD-dependent alcohol dehydrogenase (347 aa).

Lysine 11 is subject to N6-methyllysine; partial. Cysteine 38, histidine 68, glutamate 98, cysteine 101, cysteine 104, cysteine 112, and cysteine 154 together coordinate Zn(2+). The residue at position 213 (lysine 213) is an N6-methyllysine; partial.

The protein belongs to the zinc-containing alcohol dehydrogenase family. Homodimer and homotetramer. Zn(2+) is required as a cofactor.

It catalyses the reaction a primary alcohol + NAD(+) = an aldehyde + NADH + H(+). The catalysed reaction is a secondary alcohol + NAD(+) = a ketone + NADH + H(+). The polypeptide is NAD-dependent alcohol dehydrogenase (adh) (Saccharolobus solfataricus (strain ATCC 35092 / DSM 1617 / JCM 11322 / P2) (Sulfolobus solfataricus)).